We begin with the raw amino-acid sequence, 466 residues long: Probable agmatine/putrescine antiporter AguD (466 aa).

12 helical membrane passes run 8–28, 30–50, 85–105, 120–140, 144–164, 192–212, 226–246, 273–293, 325–345, 350–370, 398–418, and 426–446; these read FSLFSAILSVICVVFVAEAAA, VAAIGNSQFFWWIVLIVAFLL, ASWFYWVNFPLWMASLAVLCP, ISLLIELIFIWVIVLISLYPV, VWILNGGAVIKVFLALALGGL, LSFISVIIFNLLGFEVICTFA, IIIGGIVIAAIYMFSAFGIGV, WFISLIAFLFMLTLVGNMVSW, WGAALMNGIVATFIVVIAPLL, LFWSFFSLNLVLFLLSYIPVF, VYMALPMIIIIISLIFTAIPL, and TEQLPITIGAIIFIVIGELII.

Belongs to the amino acid-polyamine-organocation (APC) superfamily. Glutamate:GABA antiporter (GGA) (TC 2.A.3.7) family.

The protein localises to the cell membrane. In terms of biological role, probably catalyzes agmatine/putrescine exchange. This is Probable agmatine/putrescine antiporter AguD from Lactococcus lactis subsp. lactis (strain IL1403) (Streptococcus lactis).